A 1081-amino-acid chain; its full sequence is Dyslexia-associated protein KIAA0319 homolog (1081 aa).

An N-terminal signal peptide occupies residues 1 to 22; the sequence is MVSPPGVLSSLLLLAAMAGGSS. The 77-residue stretch at 23 to 99 folds into the MANSC domain; it reads QQCSEGRTYS…PRTTGPIRSY (77 aa). The Extracellular portion of the chain corresponds to 23–964; sequence QQCSEGRTYS…WDGESNCEWS (942 aa). Disordered regions lie at residues 141-160, 168-216, and 228-298; these read LPFLGKDGGPEETAEYSDDY, LQPS…DLTP, and NEST…TTVE. 3 stretches are compositionally biased toward polar residues: residues 197–209, 228–253, and 283–298; these read ASATGDNSAASTE, NESTWSPTPRHSEMSSMWPSSVTASP, and HNPSPASLESSPTTVE. 5 consecutive PKD domains span residues 345–436, 444–533, 539–629, 630–723, and 729–820; these read AVSA…VMPA, VAIV…IRGS, VANA…VQAE, NNQA…VKKE, and RAQA…VLPD. N-linked (GlcNAc...) asparagine glycosylation is found at N430 and N522. Residues 965-985 form a helical membrane-spanning segment; it reads VFYVAALALTLTVLTGAVTWV. The Cytoplasmic portion of the chain corresponds to 986–1081; that stretch reads CICCCRRRKR…VSFGYYSKDR (96 aa). Positions 1004–1007 match the Endocytosis signal motif; it reads YTIL.

Homodimer. Interacts with AP2M1; required for clathrin-mediated endocytosis. N-glycosylated. Post-translationally, O-glycosylated. In terms of processing, shedding of the extracellular domain and intramembrane cleavage produce several proteolytic products. The intramembrane cleavage releases a soluble cytoplasmic polypeptide that translocates to the nucleolus. As to expression, highly expressed during development in ventricular zone, intermediate zone, cortical plate, striatum, hippocampus, and brain stem.

The protein localises to the cell membrane. It is found in the early endosome membrane. In terms of biological role, involved in neuronal migration during development of the cerebral neocortex. May function in a cell autonomous and a non-cell autonomous manner and play a role in appropriate adhesion between migrating neurons and radial glial fibers. May also regulate growth and differentiation of dendrites. The polypeptide is Dyslexia-associated protein KIAA0319 homolog (Rattus norvegicus (Rat)).